The chain runs to 130 residues: Protein BLT4 (130 aa).

The N-terminal stretch at 1-25 (MARTAATKLALVPLVAAMLLVAADA) is a signal peptide. Residues 80–130 (VPARTTPAGPQASPPGAASASPTRSAPVSTALRSTDRTRAPHISSDRRLVG) are disordered. Low complexity predominate over residues 84–110 (TTPAGPQASPPGAASASPTRSAPVSTA). Positions 113-130 (STDRTRAPHISSDRRLVG) are enriched in basic and acidic residues.

This sequence belongs to the plant LTP family. As to expression, shoot meristem.

In terms of biological role, possible dehydrative stress responsive protein. Not shown to have lipid transfer activity. This is Protein BLT4 (BLT4) from Hordeum vulgare (Barley).